The following is a 1088-amino-acid chain: Ran-binding protein 17 (1088 aa).

Ala-2 carries the post-translational modification N-acetylalanine. Residue Ser-569 is modified to Phosphoserine.

Belongs to the exportin family. Binds to nucleoporins and the GTP-bound form of Ran. As to expression, highly expressed in primary spermatocytes and very weakly in pancreas.

The protein localises to the cytoplasm. It localises to the nucleus. Its subcellular location is the nuclear pore complex. Its function is as follows. May function as a nuclear transport receptor. The chain is Ran-binding protein 17 (Ranbp17) from Mus musculus (Mouse).